Consider the following 506-residue polypeptide: Probable Xaa-Pro aminopeptidase PADG_06815 (506 aa).

The Mn(2+) site is built by aspartate 285, aspartate 296, glutamate 433, and glutamate 471.

It belongs to the peptidase M24B family. It depends on Mn(2+) as a cofactor.

It catalyses the reaction Release of any N-terminal amino acid, including proline, that is linked to proline, even from a dipeptide or tripeptide.. In terms of biological role, catalyzes the removal of a penultimate prolyl residue from the N-termini of peptides. This is Probable Xaa-Pro aminopeptidase PADG_06815 from Paracoccidioides brasiliensis (strain Pb18).